Consider the following 160-residue polypeptide: Transcription elongation factor GreA (160 aa).

Residues 3-84 (NIVDDKILLT…SKAKIIKADL (82 aa)) adopt a coiled-coil conformation.

This sequence belongs to the GreA/GreB family.

Necessary for efficient RNA polymerase transcription elongation past template-encoded arresting sites. The arresting sites in DNA have the property of trapping a certain fraction of elongating RNA polymerases that pass through, resulting in locked ternary complexes. Cleavage of the nascent transcript by cleavage factors such as GreA or GreB allows the resumption of elongation from the new 3'terminus. GreA releases sequences of 2 to 3 nucleotides. This is Transcription elongation factor GreA from Mesomycoplasma hyopneumoniae (strain J / ATCC 25934 / NCTC 10110) (Mycoplasma hyopneumoniae).